We begin with the raw amino-acid sequence, 362 residues long: tRNA-specific 2-thiouridylase MnmA 3 (362 aa).

ATP-binding positions include 11–18 (GMSGGIDS) and methionine 37. Catalysis depends on cysteine 91, which acts as the Nucleophile. Cysteine 91 and cysteine 188 form a disulfide bridge. ATP is bound at residue glycine 115. Positions 137–139 (KDQ) are interaction with tRNA. Cysteine 188 (cysteine persulfide intermediate) is an active-site residue. Residues 296–297 (RY) are interaction with tRNA.

The protein belongs to the MnmA/TRMU family.

It localises to the cytoplasm. It catalyses the reaction S-sulfanyl-L-cysteinyl-[protein] + uridine(34) in tRNA + AH2 + ATP = 2-thiouridine(34) in tRNA + L-cysteinyl-[protein] + A + AMP + diphosphate + H(+). In terms of biological role, catalyzes the 2-thiolation of uridine at the wobble position (U34) of tRNA, leading to the formation of s(2)U34. This Bacteroides fragilis (strain ATCC 25285 / DSM 2151 / CCUG 4856 / JCM 11019 / LMG 10263 / NCTC 9343 / Onslow / VPI 2553 / EN-2) protein is tRNA-specific 2-thiouridylase MnmA 3.